We begin with the raw amino-acid sequence, 136 residues long: Large ribosomal subunit protein uL16 (136 aa).

This sequence belongs to the universal ribosomal protein uL16 family. In terms of assembly, part of the 50S ribosomal subunit.

Binds 23S rRNA and is also seen to make contacts with the A and possibly P site tRNAs. This Buchnera aphidicola subsp. Baizongia pistaciae (strain Bp) protein is Large ribosomal subunit protein uL16.